The chain runs to 1130 residues: Putative protein tag-278 (1130 aa).

3 disordered regions span residues 1–92 (MSRS…DIDN), 104–129 (VARE…ELKR), and 974–1130 (NELI…AWKF). 2 coiled-coil regions span residues 121-779 (AGRE…EEIK) and 805-1061 (EERE…ARAK). Residues 983 to 993 (RQTDESTSEPH) are compositionally biased toward basic and acidic residues. Residues 999-1011 (SITSHGVFQNFVS) are compositionally biased toward polar residues. Composition is skewed to basic and acidic residues over residues 1013–1057 (MKDK…EKSP) and 1068–1081 (RLRD…KSDN). Residues 1082 to 1095 (LESTPSSSSRNLLS) are compositionally biased toward low complexity. Residues 1116–1130 (TKKDSSSEKRPAWKF) show a composition bias toward basic and acidic residues.

The protein is Putative protein tag-278 (tag-278) of Caenorhabditis elegans.